The following is a 470-amino-acid chain: Cysteine--tRNA ligase (470 aa).

Residue C29 participates in Zn(2+) binding. Positions 31–41 (PTVYNYAHIGN) match the 'HIGH' region motif. 3 residues coordinate Zn(2+): C211, H236, and E240. The 'KMSKS' region motif lies at 273–277 (KMSKS). K276 contacts ATP.

It belongs to the class-I aminoacyl-tRNA synthetase family. Monomer. Zn(2+) serves as cofactor.

The protein localises to the cytoplasm. It catalyses the reaction tRNA(Cys) + L-cysteine + ATP = L-cysteinyl-tRNA(Cys) + AMP + diphosphate. This chain is Cysteine--tRNA ligase, found in Phenylobacterium zucineum (strain HLK1).